We begin with the raw amino-acid sequence, 167 residues long: Centrin-3 (167 aa).

EF-hand domains are found at residues 25 to 60, 61 to 96, 98 to 133, and 134 to 167; these read EQKQEIKDAFELFDTDKDEAIDYHELKVAMRALGFD, VKKADVLKILKDYDREATGKITFEDFNEVVTDWILE, DPHEEILKAFKLFDDDDSGKISLRNLRRVARELGEN, and MSDEELRAMIEEFDKDGDGEINQEEFIAIMTGDI. Ser135 bears the Phosphoserine mark. Residues Asp147, Asp149, Asp151, Glu153, and Glu158 each coordinate Ca(2+).

This sequence belongs to the centrin family. Monomer. Component of the nuclear pore complex (NPC)-associated TREX-2 complex (transcription and export complex 2), composed of at least GANP, 2 copies of ENY2, PCID2, SEM1/DSS1, and either centrin CETN2 or centrin CETN3. The TREX-2 complex also associates with ALYREF/ALY and with the nucleoporin NUP153. Interacts with USP49.

It is found in the cytoplasm. Its subcellular location is the cytoskeleton. The protein localises to the microtubule organizing center. It localises to the centrosome. The protein resides in the nucleus. It is found in the nucleolus. Its subcellular location is the nucleus envelope. The protein localises to the nuclear pore complex. It localises to the centriole. Functionally, plays a fundamental role in microtubule-organizing center structure and function. Its function is as follows. As a component of the TREX-2 complex, involved in the export of mRNAs to the cytoplasm through the nuclear pores. The sequence is that of Centrin-3 (CETN3) from Homo sapiens (Human).